The sequence spans 451 residues: Tubulin alpha-1/alpha-2 chain (451 aa).

Residue glutamine 11 coordinates GTP. Lysine 40 carries the N6-acetyllysine modification. GTP contacts are provided by glutamate 71, glycine 144, threonine 145, threonine 179, asparagine 206, and asparagine 228. A Mg(2+)-binding site is contributed by glutamate 71. The active site involves glutamate 254.

The protein belongs to the tubulin family. In terms of assembly, dimer of alpha and beta chains. A typical microtubule is a hollow water-filled tube with an outer diameter of 25 nm and an inner diameter of 15 nM. Alpha-beta heterodimers associate head-to-tail to form protofilaments running lengthwise along the microtubule wall with the beta-tubulin subunit facing the microtubule plus end conferring a structural polarity. Microtubules usually have 13 protofilaments but different protofilament numbers can be found in some organisms and specialized cells. Requires Mg(2+) as cofactor. In terms of processing, undergoes a tyrosination/detyrosination cycle, the cyclic removal and re-addition of a C-terminal tyrosine residue by the enzymes tubulin tyrosine carboxypeptidase (TTCP) and tubulin tyrosine ligase (TTL), respectively. Acetylation of alpha chains at Lys-40 stabilizes microtubules and affects affinity and processivity of microtubule motors. This modification has a role in multiple cellular functions, ranging from cell motility, cell cycle progression or cell differentiation to intracellular trafficking and signaling.

The protein localises to the cytoplasm. It is found in the cytoskeleton. It carries out the reaction GTP + H2O = GDP + phosphate + H(+). Tubulin is the major constituent of microtubules, a cylinder consisting of laterally associated linear protofilaments composed of alpha- and beta-tubulin heterodimers. Microtubules grow by the addition of GTP-tubulin dimers to the microtubule end, where a stabilizing cap forms. Below the cap, tubulin dimers are in GDP-bound state, owing to GTPase activity of alpha-tubulin. The chain is Tubulin alpha-1/alpha-2 chain (TUBA1) from Volvox carteri (Green alga).